Reading from the N-terminus, the 123-residue chain is Small ribosomal subunit protein uS12 (123 aa).

The disordered stretch occupies residues 1-24; it reads MPTINQLVRKGRTPQKVKSKVPAM. The span at 9–19 shows a compositional bias: basic residues; it reads RKGRTPQKVKS. Position 89 is a 3-methylthioaspartic acid (aspartate 89).

The protein belongs to the universal ribosomal protein uS12 family. Part of the 30S ribosomal subunit. Contacts proteins S8 and S17. May interact with IF1 in the 30S initiation complex.

Functionally, with S4 and S5 plays an important role in translational accuracy. Its function is as follows. Interacts with and stabilizes bases of the 16S rRNA that are involved in tRNA selection in the A site and with the mRNA backbone. Located at the interface of the 30S and 50S subunits, it traverses the body of the 30S subunit contacting proteins on the other side and probably holding the rRNA structure together. The combined cluster of proteins S8, S12 and S17 appears to hold together the shoulder and platform of the 30S subunit. The chain is Small ribosomal subunit protein uS12 from Sphingopyxis alaskensis (strain DSM 13593 / LMG 18877 / RB2256) (Sphingomonas alaskensis).